A 362-amino-acid chain; its full sequence is Aminomethyltransferase (362 aa).

This sequence belongs to the GcvT family. The glycine cleavage system is composed of four proteins: P, T, L and H.

The catalysed reaction is N(6)-[(R)-S(8)-aminomethyldihydrolipoyl]-L-lysyl-[protein] + (6S)-5,6,7,8-tetrahydrofolate = N(6)-[(R)-dihydrolipoyl]-L-lysyl-[protein] + (6R)-5,10-methylene-5,6,7,8-tetrahydrofolate + NH4(+). The glycine cleavage system catalyzes the degradation of glycine. The protein is Aminomethyltransferase of Listeria monocytogenes serotype 4b (strain CLIP80459).